The chain runs to 242 residues: Peptidyl-prolyl cis-trans isomerase FKBP20-2, chloroplastic (242 aa).

The N-terminal 31 residues, Met1–Cys31, are a transit peptide targeting the chloroplast. Residues Cys32 to Ala67 constitute a thylakoid transit peptide. In terms of domain architecture, PPIase FKBP-type spans Gly138–Gln225. The cysteines at positions 227 and 241 are disulfide-linked.

This sequence belongs to the FKBP-type PPIase family. As to quaternary structure, interacts in vitro with LTO1.

Its subcellular location is the plastid. The protein localises to the chloroplast thylakoid lumen. It catalyses the reaction [protein]-peptidylproline (omega=180) = [protein]-peptidylproline (omega=0). PPIases accelerate the folding of proteins. It catalyzes the cis-trans isomerization of proline imidic peptide bonds in oligopeptides. Involved in the accumulation of the PSII complex. This chain is Peptidyl-prolyl cis-trans isomerase FKBP20-2, chloroplastic, found in Arabidopsis thaliana (Mouse-ear cress).